The primary structure comprises 168 residues: Oleosin 18.2 kDa (168 aa).

Alanine 2 bears the N-acetylalanine mark. The polar stretch occupies residues 2–45; the sequence is AEVRDRNLPHQVQVHPQYRLDNTTGGGYGAKNYHSGPSTSQVLA. The next 3 helical transmembrane spans lie at 43–63, 76–96, and 97–117; these read VLAVLTLLPIGGTLLALAGLT, PLFIIFSPVLVPAAIAIAMAV, and TGFLSSGAFGLTGLSSLSYVL. The hydrophobic stretch occupies residues 46-117; it reads VLTLLPIGGT…TGLSSLSYVL (72 aa).

The protein belongs to the oleosin family.

It localises to the lipid droplet. It is found in the membrane. In terms of biological role, may have a structural role to stabilize the lipid body during desiccation of the seed by preventing coalescence of the oil. Probably interacts with both lipid and phospholipid moieties of lipid bodies. May also provide recognition signals for specific lipase anchorage in lipolysis during seedling growth. In Gossypium hirsutum (Upland cotton), this protein is Oleosin 18.2 kDa (MATP6-A).